The following is a 443-amino-acid chain: Phosphoglucosamine mutase (443 aa).

Serine 103 serves as the catalytic Phosphoserine intermediate. Residues serine 103, aspartate 244, aspartate 246, and aspartate 248 each coordinate Mg(2+). Position 103 is a phosphoserine (serine 103).

This sequence belongs to the phosphohexose mutase family. Mg(2+) serves as cofactor. Activated by phosphorylation.

It carries out the reaction alpha-D-glucosamine 1-phosphate = D-glucosamine 6-phosphate. In terms of biological role, catalyzes the conversion of glucosamine-6-phosphate to glucosamine-1-phosphate. The chain is Phosphoglucosamine mutase from Pelagibacter ubique (strain HTCC1062).